The chain runs to 162 residues: Caveolin-2 (162 aa).

The Cytoplasmic segment spans residues 1–86 (MGLETEKADV…FEISKYVMYK (86 aa)). Y19 carries the phosphotyrosine; by SRC modification. Phosphoserine occurs at positions 20 and 23. Y27 is subject to Phosphotyrosine; by SRC. S36 carries the phosphoserine modification. An intramembrane region (helical) is located at residues 87 to 107 (FLTVFLAIPLAFIAGILFATL). Over 108 to 162 (SCLHIWILMPFVKTCLMVLPSVQTIWKSVTDVFIAPLCTSVGRSFSSVSLQLSQD) the chain is Cytoplasmic.

It belongs to the caveolin family. As to quaternary structure, monomer or homodimer. Interacts with CAV1; the interaction forms a stable heterooligomeric complex that is required for targeting to lipid rafts and for caveolae formation. Tyrosine phosphorylated forms do not form heterooligomers with the Tyr-19-phosphorylated form existing as a monomer or dimer, and the Tyr-27-form as a monomer only. Interacts (tyrosine phosphorylated form) with the SH2 domain-containing proteins, RASA1, NCK1 and SRC. Interacts (tyrosine phosphorylated form) with INSR, the interaction (Tyr-27-phosphorylated form) is increased on insulin stimulation. Interacts (Tyr-19 phosphorylated form) with MAPK1 (phosphorylated form); the interaction, promoted by insulin, leads to nuclear location and MAPK1 activation. Interacts with STAT3; the interaction is increased on insulin-induced tyrosine phosphorylation leading to STAT activation. In terms of processing, phosphorylated on serine and tyrosine residues. CAV1 promotes phosphorylation on Ser-23 which then targets the complex to the plasma membrane, lipid rafts and caveolae. Phosphorylation on Ser-36 appears to modulate mitosis in endothelial cells. Phosphorylation on both Tyr-19 and Tyr-27 is required for insulin-induced 'Ser-727' phosphorylation of STAT3 and its activation. Phosphorylation on Tyr-19 is required for insulin-induced phosphorylation of MAPK1 and DNA binding of STAT3. Tyrosine phosphorylation is induced by both EGF and insulin (By. similarity).

The protein resides in the nucleus. The protein localises to the cytoplasm. It localises to the golgi apparatus membrane. It is found in the cell membrane. Its subcellular location is the membrane. The protein resides in the caveola. Its function is as follows. May act as a scaffolding protein within caveolar membranes. Interacts directly with G-protein alpha subunits and can functionally regulate their activity. Acts as an accessory protein in conjunction with CAV1 in targeting to lipid rafts and driving caveolae formation. The Ser-36 phosphorylated form has a role in modulating mitosis in endothelial cells. Positive regulator of cellular mitogenesis of the MAPK signaling pathway. Required for the insulin-stimulated nuclear translocation and activation of MAPK1 and STAT3, and the subsequent regulation of cell cycle progression. This is Caveolin-2 (CAV2) from Chlorocebus aethiops (Green monkey).